The primary structure comprises 310 residues: Probable plastid-lipid-associated protein 2, chloroplastic (310 aa).

A chloroplast-targeting transit peptide spans 1–59 (MATVQLSTQFSCQTRVSISPNSKSISKPPFLVPVTSIIHRPMISTGGIAVSPRRVFKVR). Thr61 bears the Phosphothreonine mark. The stretch at 65–94 (EIGSALLAAEEAIEDVEETERLKRSLVDSL) forms a coiled coil.

The protein belongs to the PAP/fibrillin family.

It is found in the plastid. It localises to the chloroplast. The protein localises to the plastoglobule. Probably involved in light/cold stress-related jasmonate (JA) biosynthesis. The protein is Probable plastid-lipid-associated protein 2, chloroplastic (PAP2) of Arabidopsis thaliana (Mouse-ear cress).